The sequence spans 86 residues: Small ribosomal subunit protein bS20 (86 aa).

The interval 1-27 is disordered; the sequence is MANSKQAKKRAGQSEKRRQHNASRRSM.

Belongs to the bacterial ribosomal protein bS20 family.

Its function is as follows. Binds directly to 16S ribosomal RNA. The polypeptide is Small ribosomal subunit protein bS20 (Colwellia psychrerythraea (strain 34H / ATCC BAA-681) (Vibrio psychroerythus)).